A 132-amino-acid polypeptide reads, in one-letter code: Flagellar assembly factor FliW (132 aa).

This sequence belongs to the FliW family. As to quaternary structure, interacts with translational regulator CsrA and flagellin(s).

It is found in the cytoplasm. In terms of biological role, acts as an anti-CsrA protein, binds CsrA and prevents it from repressing translation of its target genes, one of which is flagellin. Binds to flagellin and participates in the assembly of the flagellum. This chain is Flagellar assembly factor FliW, found in Borreliella afzelii (strain PKo) (Borrelia afzelii).